The chain runs to 96 residues: Small ribosomal subunit protein bS6c (96 aa).

The protein belongs to the bacterial ribosomal protein bS6 family.

The protein localises to the plastid. It localises to the chloroplast. Functionally, binds together with bS18 to 16S ribosomal RNA. In Guillardia theta (Cryptophyte), this protein is Small ribosomal subunit protein bS6c (rps6).